The primary structure comprises 255 residues: Hydroxyacylglutathione hydrolase (255 aa).

Positions 56, 58, 60, 61, 114, 133, and 171 each coordinate Zn(2+).

The protein belongs to the metallo-beta-lactamase superfamily. Glyoxalase II family. Monomer. Requires Zn(2+) as cofactor.

The catalysed reaction is an S-(2-hydroxyacyl)glutathione + H2O = a 2-hydroxy carboxylate + glutathione + H(+). The protein operates within secondary metabolite metabolism; methylglyoxal degradation; (R)-lactate from methylglyoxal: step 2/2. Its function is as follows. Thiolesterase that catalyzes the hydrolysis of S-D-lactoyl-glutathione to form glutathione and D-lactic acid. The polypeptide is Hydroxyacylglutathione hydrolase (Fuscovulum blasticum (Rhodobacter blasticus)).